Reading from the N-terminus, the 365-residue chain is Galactoside alpha-(1,2)-fucosyltransferase 1 (365 aa).

Residues 1–8 (MWVPSRRH) lie on the Cytoplasmic side of the membrane. A helical; Signal-anchor for type II membrane protein membrane pass occupies residues 9 to 28 (LCLTFLLVCVLAAIFFLNVY). The Lumenal portion of the chain corresponds to 29–365 (QDLFYSGLDL…LSPLQMLAGP (337 aa)). Asn65, Asn301, and Asn327 each carry an N-linked (GlcNAc...) asparagine glycan.

It belongs to the glycosyltransferase 11 family.

The protein localises to the golgi apparatus. It is found in the golgi stack membrane. It catalyses the reaction a beta-D-galactosyl-(1-&gt;4)-N-acetyl-beta-D-glucosaminyl derivative + GDP-beta-L-fucose = an alpha-L-Fuc-(1-&gt;2)-beta-D-Gal-(1-&gt;4)-beta-D-GlcNAc derivative + GDP + H(+). The enzyme catalyses a ganglioside GA1 + GDP-beta-L-fucose = a ganglioside Fuc-GA1 + GDP + H(+). The catalysed reaction is a beta-D-Gal-(1-&gt;3)-beta-D-GlcNAc-(1-&gt;3)-beta-D-Gal-(1-&gt;4)-beta-D-Glc-(1&lt;-&gt;1')-Cer(d18:1(4E)) + GDP-beta-L-fucose = alpha-L-fucosyl-(1-&gt;2)- beta-D-galactosyl-(1-&gt;3)-N-acetyl-beta-D-glucosaminyl-(1-&gt;3)-beta-D-galactosyl-(1-&gt;4)-beta-D-glucosyl-(1&lt;-&gt;1')-N-acylsphing-4-enine + GDP + H(+). It carries out the reaction a neolactoside nLc4Cer(d18:1(4E)) + GDP-beta-L-fucose = a neolactoside IV(2)-alpha-Fuc-nLc4Cer(d18:1(4E)) + GDP + H(+). It catalyses the reaction a ganglioside GM1 + GDP-beta-L-fucose = a ganglioside Fuc-GM1 + GDP + H(+). The enzyme catalyses beta-D-galactosyl-(1-&gt;3)-N-acetyl-D-galactosamine + GDP-beta-L-fucose = alpha-L-fucosyl-(1-&gt;2)-beta-D-galactosyl-(1-&gt;3)-N-acetyl-D-galactosamine + GDP + H(+). The protein operates within protein modification; protein glycosylation. Its function is as follows. Catalyzes the transfer of L-fucose, from a guanosine diphosphate-beta-L-fucose, to the terminal galactose residue of glycoconjugates through an alpha(1,2) linkage leading to H antigen synthesis that is an intermediate substrate in the synthesis of ABO blood group antigens. H antigen is essential for maturation of the glomerular layer of the main olfactory bulb, in cell migration and early cell-cell contacts during tumor associated angiogenesis. Preferentially fucosylates soluble lactose and to a lesser extent fucosylates glycolipids gangliosides GA1 and GM1a. This is Galactoside alpha-(1,2)-fucosyltransferase 1 from Sus scrofa (Pig).